The chain runs to 118 residues: NAD(P)H-quinone oxidoreductase subunit M (118 aa).

This sequence belongs to the complex I NdhM subunit family. In terms of assembly, NDH-1 can be composed of about 15 different subunits; different subcomplexes with different compositions have been identified which probably have different functions.

It is found in the cellular thylakoid membrane. It carries out the reaction a plastoquinone + NADH + (n+1) H(+)(in) = a plastoquinol + NAD(+) + n H(+)(out). The enzyme catalyses a plastoquinone + NADPH + (n+1) H(+)(in) = a plastoquinol + NADP(+) + n H(+)(out). Functionally, NDH-1 shuttles electrons from an unknown electron donor, via FMN and iron-sulfur (Fe-S) centers, to quinones in the respiratory and/or the photosynthetic chain. The immediate electron acceptor for the enzyme in this species is believed to be plastoquinone. Couples the redox reaction to proton translocation, and thus conserves the redox energy in a proton gradient. Cyanobacterial NDH-1 also plays a role in inorganic carbon-concentration. The polypeptide is NAD(P)H-quinone oxidoreductase subunit M (Trichormus variabilis (strain ATCC 29413 / PCC 7937) (Anabaena variabilis)).